A 414-amino-acid polypeptide reads, in one-letter code: Phthiocerol/phthiodiolone dimycocerosyl transferase (414 aa).

Residue histidine 118 is the Proton acceptor of the active site.

The protein belongs to the acyltransferase PapA5 family. As to quaternary structure, monomer. Interacts directly with the acyl carrier protein (ACP) domain of the mycocerosic acid synthase (mas) protein.

The enzyme catalyses 2 a mycocerosyl-[mycocerosic acid synthase] + a phthiocerol = a dimycocerosyl phthiocerol + 2 holo-[mycocerosic acid synthase].. It catalyses the reaction 2 a mycocerosyl-[mycocerosic acid synthase] + a phthiodiolone = a dimycocerosyl phthiodiolone + 2 holo-[mycocerosic acid synthase].. It carries out the reaction 2 a mycocerosyl-[mycocerosic acid synthase] + a phenolphthiocerol = a dimycocerosyl phenolphthiocerol + 2 holo-[mycocerosic acid synthase].. Catalyzes diesterification of phthiocerol, phthiodiolone, and phenolphthiocerol with mycocerosic acids, the final step in the phthiocerol, phthiodiolone and phenolphthiocerol dimycocerosate esters (PDIM) synthesis. Can directly transfer the mycocerosate bound to the mycocerosic acid synthase (mas) onto the substrate alcohols. In Mycobacterium ulcerans (strain Agy99), this protein is Phthiocerol/phthiodiolone dimycocerosyl transferase (papA5).